The primary structure comprises 127 residues: Large ribosomal subunit protein eL18 (127 aa).

The protein belongs to the eukaryotic ribosomal protein eL18 family.

In Methanopyrus kandleri (strain AV19 / DSM 6324 / JCM 9639 / NBRC 100938), this protein is Large ribosomal subunit protein eL18.